Reading from the N-terminus, the 703-residue chain is Lactococcin-G-processing and transport ATP-binding protein LagD (703 aa).

Residues 7 to 132 (QQDEKDCGVA…KEWTGVLLFP (126 aa)) form the Peptidase C39 domain. Cys13 is an active-site residue. One can recognise an ABC transmembrane type-1 domain in the interval 153 to 435 (PILIKQKSLF…IINLQVKMQK (283 aa)). Helical transmembrane passes span 162–182 (FITIFGIISSYYFQGLLDNII), 189–209 (TLNILSIGLIFVYLFRVLFEY), 224–244 (MSIMLGYFKHVLSLPLSFFAT), 267–287 (ATLSLILDIGMVILVGTTLAI), 291–311 (QLFLLTLAFLPFYILVVYVFI), 381–401 (MVIELISSVLILWLGSSYVID), and 409–429 (LITYNALLVFFTEPLQNIINL). Positions 469-703 (IKLDKVSFSY…EGVYRRLLNA (235 aa)) constitute an ABC transporter domain. An ATP-binding site is contributed by 502-509 (GVSGSGKS).

This sequence belongs to the ABC transporter superfamily. LagD family. In terms of assembly, homodimer.

It localises to the cell membrane. LagD (TC 3.A.1) is involved in processing the signal peptide and probably also in export of the bacteriocin lactococcin G. The polypeptide is Lactococcin-G-processing and transport ATP-binding protein LagD (lagD) (Lactococcus lactis subsp. lactis (Streptococcus lactis)).